The sequence spans 172 residues: dCTP deaminase (172 aa).

Residues 97-102 (RSSFAR) and Asp113 each bind dCTP. The active-site Proton donor/acceptor is the Glu123. DCTP contacts are provided by Tyr155 and Gln162.

This sequence belongs to the dCTP deaminase family. In terms of assembly, homotrimer.

The enzyme catalyses dCTP + H2O + H(+) = dUTP + NH4(+). The protein operates within pyrimidine metabolism; dUMP biosynthesis; dUMP from dCTP (dUTP route): step 1/2. Functionally, catalyzes the deamination of dCTP to dUTP. In Metallosphaera sedula (strain ATCC 51363 / DSM 5348 / JCM 9185 / NBRC 15509 / TH2), this protein is dCTP deaminase.